We begin with the raw amino-acid sequence, 1832 residues long: Zinc finger SWIM domain-containing protein 8 (1832 aa).

Ser36, Ser48, and Ser53 each carry phosphoserine. A disordered region spans residues 45-67; the sequence is RKQSAGPNSPTGGGGGGGSGGTR. Over residues 55-65 the composition is skewed to gly residues; that stretch reads TGGGGGGGSGG. The SWIM-type zinc-finger motif lies at 172–208; it reads YNVAVMFDRCRVTSCSCTCGAGAKWCTHVVALCLFRI. Phosphoserine is present on residues Ser437 and Ser564. Disordered regions lie at residues 516–722, 800–821, and 1018–1216; these read PGAS…VGEE, NPPDLKVEPPPAKGKKNKVSTS, and SQTH…TVDV. Over residues 563–572 the composition is skewed to basic and acidic residues; it reads LSAEGGDKAL. The span at 1021 to 1042 shows a compositional bias: polar residues; it reads HKPQTLSSFYSSSRPATANQRS. Positions 1121 to 1132 are enriched in gly residues; it reads SRGGYNGRGWGS. The residue at position 1141 (Thr1141) is a Phosphothreonine. Polar residues predominate over residues 1146–1161; it reads IDSSAPETTSDSSPTL. Ser1155, Ser1158, and Ser1162 each carry phosphoserine. Low complexity predominate over residues 1176–1211; it reads GRGQDSDSISSSSSDSLGSSSSSGSRRASASGGARA. At Ser1270 the chain carries Phosphoserine. Polar residues predominate over residues 1435–1446; sequence STAREGATSCSG. The interval 1435 to 1465 is disordered; it reads STAREGATSCSGSGMRAAGEAGRGLPEGRGA. A compositionally biased stretch (gly residues) spans 1455–1465; it reads AGRGLPEGRGA. Phosphoserine is present on Ser1831.

Belongs to the ZSWIM8 family. In terms of assembly, component of the SCF-like E3 ubiquitin-protein ligase complex which contains CUL3, RBX1, ELOB, ELOC and ZSWIM8. Interacts with DAB1.

The protein localises to the cytoplasm. It is found in the cytosol. It functions in the pathway protein modification; protein ubiquitination. Substrate recognition component of a SCF-like E3 ubiquitin-protein ligase complex that promotes target-directed microRNA degradation (TDMD), a process that mediates degradation of microRNAs (miRNAs). The SCF-like E3 ubiquitin-protein ligase complex acts by catalyzing ubiquitination and subsequent degradation of AGO proteins (AGO1, AGO2, AGO3 and/or AGO4), thereby exposing miRNAs for degradation. Specifically recognizes and binds AGO proteins when they are engaged with a TDMD target. May also acts as a regulator of axon guidance: specifically recognizes misfolded ROBO3 and promotes its ubiquitination and subsequent degradation. Plays an essential role for proper embryonic development of heart and lung. Controls protein quality of DAB1, a key signal molecule for brain development, thus protecting its signaling strength. Mechanistically, recognizes intrinsically disordered regions of DAB1 and eliminates misfolded DAB1 that cannot be properly phosphorylated. The polypeptide is Zinc finger SWIM domain-containing protein 8 (Mus musculus (Mouse)).